The primary structure comprises 376 residues: MSTFGKLFRVTTYGESHCKSVGCIVDGVPPGMSLTEADIQPQLTRRRPGQSKLSTPRDEKDRVEIQSGTEFGKTLGTPIAMMIKNEDQRPHDYSDMDKFPRPSHADFTYSEKYGIKASSGGGRASARETIGRVASGAIAEKFLAQNSNVEIVAFVTQIGEIKMNRDSFDPEFQHLLNTITREKVDSMGPIRCPDASVAGLMVKEIEKYRGNKDSIGGVVTCVVRNLPTGLGEPCFDKLEAMLAHAMLSIPASKGFEIGSGFQGVSVPGSKHNDPFYFEKETNRLRTKTNNSGGVQGGISNGENIYFSVPFKSVATISQEQKTATYDGEEGILAAKGRHDPAVTPRAIPIVEAMTALVLADALLIQKARDFSRSVVH.

An N-acetylserine modification is found at S2. H17 is a catalytic residue. Residues 39–61 form a disordered region; that stretch reads IQPQLTRRRPGQSKLSTPRDEKD. Residues H104 and D339 contribute to the active site.

Belongs to the chorismate synthase family. In terms of assembly, homotetramer.

It catalyses the reaction 5-O-(1-carboxyvinyl)-3-phosphoshikimate = chorismate + phosphate. The enzyme catalyses FMNH2 + NADP(+) = FMN + NADPH + 2 H(+). It functions in the pathway metabolic intermediate biosynthesis; chorismate biosynthesis; chorismate from D-erythrose 4-phosphate and phosphoenolpyruvate: step 7/7. In terms of biological role, bifunctional chorismate synthase and flavin reductase that catalyzes the conversion of 5-enolpyruvylshikimate 3-phosphate (EPSP) to form chorismate, which is the last common intermediate in the synthesis of the three aromatic amino acids phenylalanine, tyrosine and tryptophan. Also acts as a flavin reductase (FR) able to generate reduced flavin mononucleotide in the presence of NADPH. This chain is Chorismate synthase ARO2, found in Saccharomyces cerevisiae (strain ATCC 204508 / S288c) (Baker's yeast).